Consider the following 276-residue polypeptide: 3-keto-5-aminohexanoate cleavage enzyme (276 aa).

Residue Glu14 coordinates (5S)-5-amino-3-oxohexanoate. 2 residues coordinate Zn(2+): His46 and His48. Residues Ser82, Gly85, Thr106, and Asn108 each coordinate (5S)-5-amino-3-oxohexanoate. Glu230 provides a ligand contact to Zn(2+).

Belongs to the BKACE family. Kce subfamily. As to quaternary structure, homotetramer. Zn(2+) serves as cofactor.

The enzyme catalyses (5S)-5-amino-3-oxohexanoate + acetyl-CoA = (3S)-3-aminobutanoyl-CoA + acetoacetate. The protein operates within amino-acid degradation; L-lysine degradation via acetate pathway. Its function is as follows. Involved in the anaerobic fermentation of lysine. Catalyzes the reversible reaction between 3-keto-5-aminohexanoate (KAH) and acetyl-CoA to form 3-aminobutyryl-CoA and acetoacetate. The reaction involves the deprotonation of KAH, the nucleophilic addition onto acetyl-CoA and the intramolecular transfer of the CoA moiety. The protein is 3-keto-5-aminohexanoate cleavage enzyme of Cloacimonas acidaminovorans (strain Evry).